Here is a 162-residue protein sequence, read N- to C-terminus: Cadmium metallothionein (162 aa).

Positions 1-2 (MD) are excised as a propeptide.

In terms of biological role, the metallothioneins are involved in the cellular sequestration of toxic metal ions. In Tetrahymena thermophila, this protein is Cadmium metallothionein (MTT1).